A 250-amino-acid chain; its full sequence is MSSFFSDSPTHPANLICELCRLFYNNGWVTGTGGGISIRDVDGPNPNIVYIAPSGIQKERLQPREMFVAELPGKILRSPNDDSDGQPLSPDLAKSFRYKPSACTPLFLSCYNMRDAGACIHTHSQNAVMATLLFEDKVEFSMSHIEQIKALPHLQVDSDTGKVQKVGSMQFYDTMVLPIIDNTPHEEDLTDSLQEAIKNYPGATAVLVRRHGIYVWGETVWKAKVYNEAIDYLLELAIKMHQAGIPLVKK.

Position 103 (Cys-103) interacts with substrate. Residues His-121 and His-123 each coordinate Zn(2+). Glu-146 acts as the Proton donor/acceptor in catalysis. His-211 is a binding site for Zn(2+).

This sequence belongs to the aldolase class II family. MtnB subfamily. Zn(2+) serves as cofactor.

It localises to the cytoplasm. The enzyme catalyses 5-(methylsulfanyl)-D-ribulose 1-phosphate = 5-methylsulfanyl-2,3-dioxopentyl phosphate + H2O. It functions in the pathway amino-acid biosynthesis; L-methionine biosynthesis via salvage pathway; L-methionine from S-methyl-5-thio-alpha-D-ribose 1-phosphate: step 2/6. In terms of biological role, catalyzes the dehydration of methylthioribulose-1-phosphate (MTRu-1-P) into 2,3-diketo-5-methylthiopentyl-1-phosphate (DK-MTP-1-P). The polypeptide is Methylthioribulose-1-phosphate dehydratase (Clavispora lusitaniae (strain ATCC 42720) (Yeast)).